A 404-amino-acid polypeptide reads, in one-letter code: Cysteine desulfurase IscS (404 aa).

Pyridoxal 5'-phosphate-binding positions include 75 to 76 (AT), Asn155, Gln183, and 203 to 205 (SAH). Lys206 carries the post-translational modification N6-(pyridoxal phosphate)lysine. Thr243 serves as a coordination point for pyridoxal 5'-phosphate. The active-site Cysteine persulfide intermediate is the Cys328. A [2Fe-2S] cluster-binding site is contributed by Cys328.

Belongs to the class-V pyridoxal-phosphate-dependent aminotransferase family. NifS/IscS subfamily. As to quaternary structure, homodimer. Forms a heterotetramer with IscU, interacts with other sulfur acceptors. The cofactor is pyridoxal 5'-phosphate.

The protein resides in the cytoplasm. The enzyme catalyses (sulfur carrier)-H + L-cysteine = (sulfur carrier)-SH + L-alanine. It participates in cofactor biosynthesis; iron-sulfur cluster biosynthesis. Functionally, master enzyme that delivers sulfur to a number of partners involved in Fe-S cluster assembly, tRNA modification or cofactor biosynthesis. Catalyzes the removal of elemental sulfur atoms from cysteine to produce alanine. Functions as a sulfur delivery protein for Fe-S cluster synthesis onto IscU, an Fe-S scaffold assembly protein, as well as other S acceptor proteins. The chain is Cysteine desulfurase IscS from Pseudomonas putida (strain ATCC 700007 / DSM 6899 / JCM 31910 / BCRC 17059 / LMG 24140 / F1).